A 289-amino-acid chain; its full sequence is Proteasome assembly chaperone 1 (289 aa).

Residues 1 to 38 (MAATFFGEVVKAPCRAGTEEEEEEEEQSRRDTPEDREV) are disordered. Ala-2 carries the post-translational modification N-acetylalanine. At Thr-18 the chain carries Phosphothreonine. Basic and acidic residues predominate over residues 27–38 (QSRRDTPEDREV). A Phosphothreonine modification is found at Thr-55. Phosphoserine is present on Ser-181. Residue Lys-265 is modified to N6-acetyllysine.

It belongs to the PSMG1 family. As to quaternary structure, forms a heterodimer with PSMG2. The PSMG1-PSMG2 heterodimer interacts directly with the PSMA5 and PSMA7 proteasome alpha subunits. In terms of processing, degraded by the proteasome upon completion of 20S proteasome maturation. In terms of tissue distribution, highly expressed in testis with moderate expression in brain, liver and kidney and low levels in heart, skeletal muscle and pancreas.

The protein resides in the cytoplasm. It is found in the endoplasmic reticulum. In terms of biological role, chaperone protein which promotes assembly of the 20S proteasome as part of a heterodimer with PSMG2. The PSMG1-PSMG2 heterodimer binds to the PSMA5 and PSMA7 proteasome subunits, promotes assembly of the proteasome alpha subunits into the heteroheptameric alpha ring and prevents alpha ring dimerization. In Mus musculus (Mouse), this protein is Proteasome assembly chaperone 1.